The following is a 783-amino-acid chain: Nuclear cap-binding protein subunit 1 (783 aa).

A disordered region spans residues 1-25 (MSRRRAHDTEDESYDHRRNKRRRVS). Phosphothreonine is present on Thr-9. One can recognise an MIF4G domain in the interval 31 to 243 (EDRLESLILR…CLWAQIRKLR (213 aa)). The tract at residues 652–683 (LSKADSSSSDTDEDTPHKRKKPITHADKPSEE) is disordered.

The protein belongs to the NCBP1 family. Component of the nuclear cap-binding complex (CBC), a heterodimer composed of Cbp80 and Cbp20 that interacts with m7GpppG-capped RNA.

It is found in the nucleus. In terms of biological role, component of the cap-binding complex (CBC), which binds cotranscriptionally to the 5'-cap of pre-mRNAs and is involved in various processes such as pre-mRNA splicing and RNA-mediated gene silencing (RNAi). The CBC complex is involved in miRNA-mediated RNA interference via its interaction with Ars2 and is required for primary microRNAs (miRNAs) processing. Also involved in innate immunity via the short interfering RNAs (siRNAs) processing machinery by restricting the viral RNA production. In the CBC complex, Cbp80 does not bind directly capped RNAs (m7GpppG-capped RNA) but is required to stabilize the movement of the N-terminal loop of Cbp20 and lock the CBC into a high affinity cap-binding state with the cap structure. This is Nuclear cap-binding protein subunit 1 (Cbp80) from Drosophila virilis (Fruit fly).